Reading from the N-terminus, the 311-residue chain is tRNA dimethylallyltransferase (311 aa).

12–19 is an ATP binding site; sequence GPTASGKT. Substrate is bound at residue 14 to 19; the sequence is TASGKT. 3 interaction with substrate tRNA regions span residues 37–40, 161–165, and 241–246; these read DSAL, QRINR, and RCVGYR.

It belongs to the IPP transferase family. In terms of assembly, monomer. Mg(2+) serves as cofactor.

It catalyses the reaction adenosine(37) in tRNA + dimethylallyl diphosphate = N(6)-dimethylallyladenosine(37) in tRNA + diphosphate. Catalyzes the transfer of a dimethylallyl group onto the adenine at position 37 in tRNAs that read codons beginning with uridine, leading to the formation of N6-(dimethylallyl)adenosine (i(6)A). In Histophilus somni (strain 2336) (Haemophilus somnus), this protein is tRNA dimethylallyltransferase.